Here is a 441-residue protein sequence, read N- to C-terminus: Ribulose bisphosphate carboxylase large chain (441 aa).

Lysine 5 bears the N6,N6,N6-trimethyllysine mark. Residues asparagine 114 and threonine 164 each contribute to the substrate site. Lysine 166 acts as the Proton acceptor in catalysis. Lysine 168 is a substrate binding site. The Mg(2+) site is built by lysine 192, aspartate 194, and glutamate 195. Position 192 is an N6-carboxylysine (lysine 192). Residue histidine 285 is the Proton acceptor of the active site. Residues arginine 286, histidine 318, and serine 370 each coordinate substrate.

The protein belongs to the RuBisCO large chain family. Type I subfamily. In terms of assembly, heterohexadecamer of 8 large chains and 8 small chains; disulfide-linked. The disulfide link is formed within the large subunit homodimers. Requires Mg(2+) as cofactor. Post-translationally, the disulfide bond which can form in the large chain dimeric partners within the hexadecamer appears to be associated with oxidative stress and protein turnover.

The protein localises to the plastid. Its subcellular location is the chloroplast. The enzyme catalyses 2 (2R)-3-phosphoglycerate + 2 H(+) = D-ribulose 1,5-bisphosphate + CO2 + H2O. It catalyses the reaction D-ribulose 1,5-bisphosphate + O2 = 2-phosphoglycolate + (2R)-3-phosphoglycerate + 2 H(+). RuBisCO catalyzes two reactions: the carboxylation of D-ribulose 1,5-bisphosphate, the primary event in carbon dioxide fixation, as well as the oxidative fragmentation of the pentose substrate in the photorespiration process. Both reactions occur simultaneously and in competition at the same active site. The chain is Ribulose bisphosphate carboxylase large chain from Argyrochosma delicatula (Delicate cloak fern).